A 669-amino-acid chain; its full sequence is Carnitine O-palmitoyltransferase 2, mitochondrial (669 aa).

Residues 1-36 (MMAGLLSTQCNSTLSKLKHLSNNPALSVLTSTHRKY) constitute a mitochondrion transit peptide. Residues 37–190 (SSKDGAGSEY…GLLEPEVFHL (154 aa)) lie on the Mitochondrial matrix side of the membrane. The note=Mitochondrial inner membrane intramembrane region spans 191 to 220 (NPAKSDTDSFKKLIRWVPPSISWFGAYMVN). The Mitochondrial matrix portion of the chain corresponds to 221-669 (AYPLDMSQYF…FTVLDGNPIH (449 aa)). The Proton acceptor role is filled by H384. 464–476 (GKEQLKKKKLSPD) is a binding site for CoA. Y498, S500, and T511 together coordinate (R)-carnitine.

Belongs to the carnitine/choline acetyltransferase family.

It localises to the mitochondrion inner membrane. It carries out the reaction (R)-carnitine + hexadecanoyl-CoA = O-hexadecanoyl-(R)-carnitine + CoA. The enzyme catalyses octanoyl-CoA + (R)-carnitine = O-octanoyl-(R)-carnitine + CoA. The catalysed reaction is decanoyl-CoA + (R)-carnitine = O-decanoyl-(R)-carnitine + CoA. It catalyses the reaction dodecanoyl-CoA + (R)-carnitine = O-dodecanoyl-R-carnitine + CoA. It carries out the reaction tetradecanoyl-CoA + (R)-carnitine = O-tetradecanoyl-(R)-carnitine + CoA. The enzyme catalyses (R)-carnitine + octadecanoyl-CoA = O-octadecanoyl-(R)-carnitine + CoA. The catalysed reaction is eicosanoyl-CoA + (R)-carnitine = O-eicosanoyl-(R)-carnitine + CoA. It catalyses the reaction (9Z)-tetradecenoyl-CoA + (R)-carnitine = O-(9Z)-tetradecenoyl-(R)-carnitine + CoA. It carries out the reaction (5Z)-tetradecenoyl-CoA + (R)-carnitine = O-(5Z)-tetradecenoyl-(R)-carnitine + CoA. The enzyme catalyses (R)-carnitine + (9Z)-octadecenoyl-CoA = O-(9Z)-octadecenoyl-(R)-carnitine + CoA. The catalysed reaction is 4,8-dimethylnonanoyl-CoA + (R)-carnitine = O-4,8-dimethylnonanoyl-(R)-carnitine + CoA. The protein operates within lipid metabolism; fatty acid beta-oxidation. Functionally, involved in the intramitochondrial synthesis of acylcarnitines from accumulated acyl-CoA metabolites. Reconverts acylcarnitines back into the respective acyl-CoA esters that can then undergo beta-oxidation, an essential step for the mitochondrial uptake of long-chain fatty acids and their subsequent beta-oxidation in the mitochondrion. Active with medium (C8-C12) and long-chain (C14-C18) acyl-CoA esters. The polypeptide is Carnitine O-palmitoyltransferase 2, mitochondrial (cpt2) (Danio rerio (Zebrafish)).